Here is a 92-residue protein sequence, read N- to C-terminus: Large ribosomal subunit protein eL43 (92 aa).

The segment at 39-60 (CEFCGKYAVKRKAVGIWGCKAC) adopts a C4-type zinc-finger fold.

Belongs to the eukaryotic ribosomal protein eL43 family.

The protein is Large ribosomal subunit protein eL43 (RPL37A) of Gossypium hirsutum (Upland cotton).